We begin with the raw amino-acid sequence, 346 residues long: Cysteinyl leukotriene receptor 2 (346 aa).

Topologically, residues 1–42 (MERKFMSLQPSISVSEMEPNGTFSNNNSRNCTIENFKREFFP) are extracellular. Residues Asn20, Asn26, and Asn30 are each glycosylated (N-linked (GlcNAc...) asparagine). Residues 43–63 (IVYLIIFFWGVLGNGLSIYVF) form a helical membrane-spanning segment. At 64-72 (LQPYKKSTS) the chain is on the cytoplasmic side. Residues 73–93 (VNVFMLNLAISDLLFISTLPF) traverse the membrane as a helical segment. The Extracellular segment spans residues 94–123 (RADYYLRGSNWIFGDLACRIMSYSLYVNMY). Cysteines 111 and 187 form a disulfide. Residues 124 to 144 (SSIYFLTVLSVVRFLAMVHPF) traverse the membrane as a helical segment. Topologically, residues 145-153 (RLLHVTSIR) are cytoplasmic. A helical transmembrane segment spans residues 154–174 (SAWILCGIIWILIMASSIMLL). At 175–204 (DSGSEQNGSVTSCLELNLYKIAKLQTMNYI) the chain is on the extracellular side. The N-linked (GlcNAc...) asparagine glycan is linked to Asn181. Residues 205–225 (ALVVGCLLPFFTLSICYLLII) form a helical membrane-spanning segment. Residues 226-245 (RVLLKVEVPESGLRVSHRKA) lie on the Cytoplasmic side of the membrane. A helical membrane pass occupies residues 246 to 266 (LTTIIITLIIFFLCFLPYHTL). Residues 267–286 (RTVHLTTWKVGLCKDRLHKA) lie on the Extracellular side of the membrane. Residues 287-307 (LVITLALAAANACFNPLLYYF) traverse the membrane as a helical segment. Residues 308-346 (AGENFKDRLKSALRKGHPQKAKTKCVFPVSVWLRKETRV) are Cytoplasmic-facing.

The protein belongs to the G-protein coupled receptor 1 family. As to expression, widely expressed, with highest levels in the heart, placenta, spleen, peripheral blood leukocytes and adrenal gland. In lung, expressed in the interstitial macrophages, and slightly in smooth muscle cells.

It localises to the cell membrane. Its function is as follows. Receptor for cysteinyl leukotrienes. The response is mediated via a G-protein that activates a phosphatidylinositol-calcium second messenger system. Stimulation by BAY u9773, a partial agonist, induces specific contractions of pulmonary veins and might also have an indirect role in the relaxation of the pulmonary vascular endothelium. The rank order of affinities for the leukotrienes is LTC4 = LTD4 &gt;&gt; LTE4. This is Cysteinyl leukotriene receptor 2 (CYSLTR2) from Homo sapiens (Human).